The chain runs to 330 residues: tRNA-modifying protein YgfZ (330 aa).

Folate-binding residues include tryptophan 28 and tryptophan 190.

It belongs to the tRNA-modifying YgfZ family.

Its subcellular location is the cytoplasm. In terms of biological role, folate-binding protein involved in regulating the level of ATP-DnaA and in the modification of some tRNAs. It is probably a key factor in regulatory networks that act via tRNA modification, such as initiation of chromosomal replication. This Yersinia pseudotuberculosis serotype IB (strain PB1/+) protein is tRNA-modifying protein YgfZ.